The primary structure comprises 537 residues: Protoporphyrinogen oxidase 1, chloroplastic (537 aa).

A chloroplast-targeting transit peptide spans 1 to 34; sequence MELSLLRPTTQSLLPSFSKPNLRLNVYKPLRLRC. N-acetylserine is present on serine 35. Residues 63 to 68, 90 to 91, and 112 to 115 contribute to the FAD site; these read GGGISG, EA, and GPNS. The segment covering 256-268 has biased composition (basic and acidic residues); sequence RKNAPKAERDPRL. Positions 256 to 275 are disordered; the sequence is RKNAPKAERDPRLPKPQGQT. 511-513 is a binding site for FAD; it reads VAL.

The protein belongs to the protoporphyrinogen/coproporphyrinogen oxidase family. Protoporphyrinogen oxidase subfamily. Requires FAD as cofactor. As to expression, expressed at high levels in the leaves and at low levels in the roots and floral buds.

It is found in the plastid. It localises to the chloroplast. The enzyme catalyses protoporphyrinogen IX + 3 O2 = protoporphyrin IX + 3 H2O2. The protein operates within porphyrin-containing compound metabolism; protoporphyrin-IX biosynthesis; protoporphyrin-IX from protoporphyrinogen-IX: step 1/1. It functions in the pathway porphyrin-containing compound metabolism; chlorophyll biosynthesis. With respect to regulation, inhibited by acifluorfen. Its function is as follows. Catalyzes the 6-electron oxidation of protoporphyrinogen-IX to form protoporphyrin-IX. The sequence is that of Protoporphyrinogen oxidase 1, chloroplastic (PPOX1) from Arabidopsis thaliana (Mouse-ear cress).